The sequence spans 452 residues: Prenyltransferase fsdK (452 aa).

Belongs to the tryptophan dimethylallyltransferase family.

Its pathway is mycotoxin biosynthesis. Prenyltransferase; part of the gene cluster that mediates the biosynthesis of fusaridione A, a bright yellow trans-fused decalin-containing tetramic acid with antimicrobial activity. The PKS module of fsdS catalyzes the formation of the polyketide unit which is then conjugated to L-tyrosine by the condensation domain of the fsdS NRPS module. Activity of the Dieckmann cyclase domain (RED) results in release of the intermediate fusaridione A. The unstable pyrrolidinedione ring of fusaridione A is opened through a reverse-Dieckmann reaction to afford its ring-opened form. This is Prenyltransferase fsdK from Fusarium heterosporum.